Here is an 82-residue protein sequence, read N- to C-terminus: Putative ribonuclease VapC34 (82 aa).

Asp4 lines the Mg(2+) pocket.

It belongs to the PINc/VapC protein family. The cofactor is Mg(2+).

In terms of biological role, toxic component of a possible type II toxin-antitoxin (TA) system. A putative RNase. Its cognate antitoxin is VapB34. The protein is Putative ribonuclease VapC34 (vapC34) of Mycobacterium tuberculosis (strain CDC 1551 / Oshkosh).